Reading from the N-terminus, the 809-residue chain is G-type lectin S-receptor-like serine/threonine-protein kinase At1g61480 (809 aa).

A signal peptide spans 1 to 24; that stretch reads MGKKRIMFFASLLLITIFLSFSYA. The 120-residue stretch at 25-144 folds into the Bulb-type lectin domain; it reads GITRESPLSI…NSGRTLWESF (120 aa). Topologically, residues 25–425 are extracellular; it reads GITRESPLSI…SELGGNKRNK (401 aa). Asparagine 53, asparagine 88, asparagine 94, asparagine 103, asparagine 117, asparagine 134, and asparagine 236 each carry an N-linked (GlcNAc...) asparagine glycan. An EGF-like domain is found at 278–314; it reads PENSCDIYGFCGPFGICVMSVPPKCKCFKGFVPKSIE. 2 disulfide bridges follow: cysteine 282–cysteine 294 and cysteine 288–cysteine 302. Residues asparagine 320 and asparagine 375 are each glycosylated (N-linked (GlcNAc...) asparagine). The 83-residue stretch at 333-415 folds into the PAN domain; it reads CQGNTNGKTV…GEILSIRLAS (83 aa). 2 disulfide bridges follow: cysteine 368–cysteine 389 and cysteine 372–cysteine 378. The helical transmembrane segment at 426–446 threads the bilayer; it reads IIVASIVSLSLFVILAFAAFC. Residues 447–809 are Cytoplasmic-facing; the sequence is FLRYKVKHTV…EMTQSVILGR (363 aa). Residues 496–781 form the Protein kinase domain; sequence FSLSNKLGQG…DLTSPKQPTF (286 aa). ATP-binding positions include 502–510 and lysine 524; that span reads LGQGGFGSV. A phosphoserine mark is found at serine 530 and serine 545. The tract at residues 585–602 is caM-binding; the sequence is RKRLEIDWPKRFNIIEGI. Catalysis depends on aspartate 621, which acts as the Proton acceptor. A phosphoserine mark is found at serine 625 and serine 638. At threonine 655 the chain carries Phosphothreonine. Residues serine 698 and serine 792 each carry the phosphoserine modification.

The protein belongs to the protein kinase superfamily. Ser/Thr protein kinase family.

The protein localises to the cell membrane. It carries out the reaction L-seryl-[protein] + ATP = O-phospho-L-seryl-[protein] + ADP + H(+). It catalyses the reaction L-threonyl-[protein] + ATP = O-phospho-L-threonyl-[protein] + ADP + H(+). This is G-type lectin S-receptor-like serine/threonine-protein kinase At1g61480 from Arabidopsis thaliana (Mouse-ear cress).